We begin with the raw amino-acid sequence, 175 residues long: Large ribosomal subunit protein uL10 (175 aa).

The protein belongs to the universal ribosomal protein uL10 family. In terms of assembly, part of the ribosomal stalk of the 50S ribosomal subunit. The N-terminus interacts with L11 and the large rRNA to form the base of the stalk. The C-terminus forms an elongated spine to which L12 dimers bind in a sequential fashion forming a multimeric L10(L12)X complex.

Forms part of the ribosomal stalk, playing a central role in the interaction of the ribosome with GTP-bound translation factors. The polypeptide is Large ribosomal subunit protein uL10 (Prochlorococcus marinus (strain AS9601)).